A 179-amino-acid chain; its full sequence is MSEEKLTQDPTAEEEQTETADQQESADVNWEQEAAHWKAQAEEHQNRMLRTMADMENLRRRVRKEQEDLAKYASQKVVEELLPILDNFERALAADKESMTVESLLTGVDMVYRQMVQVFDKEGLVAIAAKGQPFDPHVHQAVMQTQDPAFESGVVVEELQKGYMFKDRVVRPAMVKVNE.

The tract at residues 1-45 (MSEEKLTQDPTAEEEQTETADQQESADVNWEQEAAHWKAQAEEHQ) is disordered. The span at 33 to 45 (EAAHWKAQAEEHQ) shows a compositional bias: basic and acidic residues.

The protein belongs to the GrpE family. In terms of assembly, homodimer.

It localises to the cytoplasm. Its function is as follows. Participates actively in the response to hyperosmotic and heat shock by preventing the aggregation of stress-denatured proteins, in association with DnaK and GrpE. It is the nucleotide exchange factor for DnaK and may function as a thermosensor. Unfolded proteins bind initially to DnaJ; upon interaction with the DnaJ-bound protein, DnaK hydrolyzes its bound ATP, resulting in the formation of a stable complex. GrpE releases ADP from DnaK; ATP binding to DnaK triggers the release of the substrate protein, thus completing the reaction cycle. Several rounds of ATP-dependent interactions between DnaJ, DnaK and GrpE are required for fully efficient folding. The chain is Protein GrpE from Brevibacillus choshinensis.